We begin with the raw amino-acid sequence, 606 residues long: CDPK-related kinase 8 (606 aa).

Residues Met1 to Arg14 show a composition bias toward polar residues. The segment at Met1 to Glu132 is disordered. Gly2 carries the N-myristoyl glycine lipid modification. Basic residues predominate over residues Lys98–Lys110. Positions Val150–Ile412 constitute a Protein kinase domain. Residues Ile156–Thr164 and Lys182 contribute to the ATP site. The active-site Proton acceptor is Asp278. Residue Ser318 is modified to Phosphoserine. The segment at Asp418–Leu448 is autoinhibitory domain. The calmodulin binding (CaMBD) stretch occupies residues Ser437–Ile457. EF-hand domains follow at residues Asp455–Ala491, Met492–His527, Glu528–Ile567, and His570–Arg599. Positions 470, 472, 516, 545, 547, 549, 556, 581, and 583 each coordinate Ca(2+). Ser585 is modified (phosphoserine).

The protein belongs to the protein kinase superfamily. Ser/Thr protein kinase family. CDPK subfamily. In terms of assembly, binds calmodulin (CaM) in a calcium-dependent manner. In terms of processing, autophosphorylated.

The protein localises to the membrane. It catalyses the reaction L-seryl-[protein] + ATP = O-phospho-L-seryl-[protein] + ADP + H(+). The enzyme catalyses L-threonyl-[protein] + ATP = O-phospho-L-threonyl-[protein] + ADP + H(+). With respect to regulation, activated by calcium and calmodulin. Autophosphorylation may play an important role in the regulation of the kinase activity. May play a role in signal transduction pathways that involve calcium as a second messenger. The sequence is that of CDPK-related kinase 8 (CRK8) from Arabidopsis thaliana (Mouse-ear cress).